A 356-amino-acid polypeptide reads, in one-letter code: 3-dehydroquinate synthase (356 aa).

NAD(+) contacts are provided by residues D69–K74, G103–D107, T127–T128, K140, and K149. Zn(2+)-binding residues include E182, H245, and H262.

This sequence belongs to the sugar phosphate cyclases superfamily. Dehydroquinate synthase family. Requires Co(2+) as cofactor. It depends on Zn(2+) as a cofactor. NAD(+) is required as a cofactor.

It localises to the cytoplasm. It catalyses the reaction 7-phospho-2-dehydro-3-deoxy-D-arabino-heptonate = 3-dehydroquinate + phosphate. It participates in metabolic intermediate biosynthesis; chorismate biosynthesis; chorismate from D-erythrose 4-phosphate and phosphoenolpyruvate: step 2/7. In terms of biological role, catalyzes the conversion of 3-deoxy-D-arabino-heptulosonate 7-phosphate (DAHP) to dehydroquinate (DHQ). This Pseudoalteromonas translucida (strain TAC 125) protein is 3-dehydroquinate synthase.